Here is a 266-residue protein sequence, read N- to C-terminus: Hemin import ATP-binding protein HmuV (266 aa).

In terms of domain architecture, ABC transporter spans 12 to 248 (LEANQLSYHV…ETLTRWYQAD (237 aa)). Residue 44–51 (GPNGAGKS) coordinates ATP.

This sequence belongs to the ABC transporter superfamily. Heme (hemin) importer (TC 3.A.1.14.5) family. The complex is composed of two ATP-binding proteins (HmuV), two transmembrane proteins (HmuU) and a solute-binding protein (HmuT).

The protein resides in the cell inner membrane. Functionally, part of the ABC transporter complex HmuTUV involved in hemin import. Responsible for energy coupling to the transport system. In Yersinia enterocolitica, this protein is Hemin import ATP-binding protein HmuV.